The chain runs to 134 residues: 6,7-dimethyl-8-ribityllumazine synthase (134 aa).

5-amino-6-(D-ribitylamino)uracil is bound by residues Phe-12, 44-46, and 68-70; these read VFD and SVI. 73–74 is a (2S)-2-hydroxy-3-oxobutyl phosphate binding site; that stretch reads DT. Residue His-76 is the Proton donor of the active site. Leu-101 provides a ligand contact to 5-amino-6-(D-ribitylamino)uracil. Arg-116 contributes to the (2S)-2-hydroxy-3-oxobutyl phosphate binding site.

This sequence belongs to the DMRL synthase family.

It carries out the reaction (2S)-2-hydroxy-3-oxobutyl phosphate + 5-amino-6-(D-ribitylamino)uracil = 6,7-dimethyl-8-(1-D-ribityl)lumazine + phosphate + 2 H2O + H(+). The protein operates within cofactor biosynthesis; riboflavin biosynthesis; riboflavin from 2-hydroxy-3-oxobutyl phosphate and 5-amino-6-(D-ribitylamino)uracil: step 1/2. Its function is as follows. Catalyzes the formation of 6,7-dimethyl-8-ribityllumazine by condensation of 5-amino-6-(D-ribitylamino)uracil with 3,4-dihydroxy-2-butanone 4-phosphate. This is the penultimate step in the biosynthesis of riboflavin. The sequence is that of 6,7-dimethyl-8-ribityllumazine synthase from Methanosarcina barkeri (strain Fusaro / DSM 804).